A 383-amino-acid chain; its full sequence is Probable mannan endo-1,4-beta-mannosidase A (383 aa).

Residues 1-21 (MKLSNALLTLASLALANVSTA) form the signal peptide. An N-linked (GlcNAc...) asparagine glycan is attached at asparagine 17. Substrate is bound at residue tryptophan 92. A glycan (N-linked (GlcNAc...) asparagine) is linked at asparagine 194. Asparagine 205 provides a ligand contact to substrate. Glutamate 206 acts as the Proton donor in catalysis. Asparagine 263 carries an N-linked (GlcNAc...) asparagine glycan. Residue tyrosine 281 coordinates substrate. The active-site Nucleophile is the glutamate 314. Substrate is bound at residue tryptophan 344.

This sequence belongs to the glycosyl hydrolase 5 (cellulase A) family.

The protein localises to the secreted. The enzyme catalyses Random hydrolysis of (1-&gt;4)-beta-D-mannosidic linkages in mannans, galactomannans and glucomannans.. Endo-1,4-mannanase, a crucial enzyme for depolymerization of seed galactomannans and wood galactoglucomannans. The sequence is that of Probable mannan endo-1,4-beta-mannosidase A (manA) from Aspergillus niger (strain ATCC MYA-4892 / CBS 513.88 / FGSC A1513).